Here is a 228-residue protein sequence, read N- to C-terminus: Probable transcriptional regulatory protein SilR (228 aa).

A Response regulatory domain is found at 2–116; that stretch reads KILIVEDDIK…ELLARVRTLL (115 aa). Aspartate 51 carries the post-translational modification 4-aspartylphosphate. The segment at residues 125 to 225 is a DNA-binding region (ompR/PhoB-type); the sequence is ESQLKVADLS…VRGVGYMLEI (101 aa).

In terms of processing, phosphorylated by SilS.

The protein resides in the cytoplasm. Its function is as follows. Component of the sil cation-efflux system that confers resistance to silver. Probable member of a two-component regulatory system SilS/SilR. The polypeptide is Probable transcriptional regulatory protein SilR (silR) (Salmonella typhimurium).